A 541-amino-acid chain; its full sequence is Zinc finger protein 513 (541 aa).

The disordered stretch occupies residues 1–118 (MPRRKQSHPQ…GEARGERPGP (118 aa)). The span at 44–55 (LEFEEEEEEDEG) shows a compositional bias: acidic residues. 2 positions are modified to phosphoserine: serine 85 and serine 96. Residues 103 to 115 (EPARGPGEARGER) are compositionally biased toward basic and acidic residues. 8 C2H2-type zinc fingers span residues 150–172 (YSCR…MQTH), 178–200 (FRCG…TRTH), 206–228 (YRCP…QRTH), 360–382 (FACS…MKTH), 388–410 (FRCA…QRVH), 416–438 (YKCP…GRIH), 444–466 (FRCS…MLRH), and 472–494 (FRCA…QKVH). The segment at 492-541 (KVHGHGGAGGPGLSAPEGWAPPHSPPSVLSTRGPAALGATGSRALHSDSP) is disordered.

The protein belongs to the krueppel C2H2-type zinc-finger protein family. In terms of assembly, binds DNA. Can associate with the proximal promoter regions of PAX6 and SP4, and their known targets including ARR3, RHO, OPN1MW2 and OPN1SW. Widely expressed. In the eye, expression is greatest in the retina and least in the lens and cornea.

The protein localises to the nucleus. Functionally, transcriptional regulator that plays a role in retinal development and maintenance. The protein is Zinc finger protein 513 (Znf513) of Mus musculus (Mouse).